The primary structure comprises 197 residues: Peptide deformylase (197 aa).

Fe cation contacts are provided by C106 and H148. The active site involves E149. H152 serves as a coordination point for Fe cation.

This sequence belongs to the polypeptide deformylase family. Fe(2+) is required as a cofactor.

The enzyme catalyses N-terminal N-formyl-L-methionyl-[peptide] + H2O = N-terminal L-methionyl-[peptide] + formate. In terms of biological role, removes the formyl group from the N-terminal Met of newly synthesized proteins. Requires at least a dipeptide for an efficient rate of reaction. N-terminal L-methionine is a prerequisite for activity but the enzyme has broad specificity at other positions. The chain is Peptide deformylase from Mycobacterium ulcerans (strain Agy99).